Consider the following 215-residue polypeptide: Pyridoxine/pyridoxamine 5'-phosphate oxidase (215 aa).

Substrate-binding positions include 9 to 12 (RRDY) and K67. Residues 62-67 (RVVLLK), 77-78 (FT), K84, and Q106 contribute to the FMN site. 3 residues coordinate substrate: Y124, R128, and S132. FMN is bound by residues 141 to 142 (QS) and W186. Position 192 to 194 (192 to 194 (RLH)) interacts with substrate. Position 196 (R196) interacts with FMN.

It belongs to the pyridoxamine 5'-phosphate oxidase family. In terms of assembly, homodimer. It depends on FMN as a cofactor.

The enzyme catalyses pyridoxamine 5'-phosphate + O2 + H2O = pyridoxal 5'-phosphate + H2O2 + NH4(+). It carries out the reaction pyridoxine 5'-phosphate + O2 = pyridoxal 5'-phosphate + H2O2. The protein operates within cofactor metabolism; pyridoxal 5'-phosphate salvage; pyridoxal 5'-phosphate from pyridoxamine 5'-phosphate: step 1/1. Its pathway is cofactor metabolism; pyridoxal 5'-phosphate salvage; pyridoxal 5'-phosphate from pyridoxine 5'-phosphate: step 1/1. In terms of biological role, catalyzes the oxidation of either pyridoxine 5'-phosphate (PNP) or pyridoxamine 5'-phosphate (PMP) into pyridoxal 5'-phosphate (PLP). This chain is Pyridoxine/pyridoxamine 5'-phosphate oxidase, found in Chromohalobacter salexigens (strain ATCC BAA-138 / DSM 3043 / CIP 106854 / NCIMB 13768 / 1H11).